A 346-amino-acid chain; its full sequence is Putative [LysW]-L-2-aminoadipate/[LysW]-L-glutamate phosphate reductase (346 aa).

S12 to T15 serves as a coordination point for NADP(+). C147 is an active-site residue. The disordered stretch occupies residues G178–V198. N310 lines the NADP(+) pocket.

It belongs to the NAGSA dehydrogenase family. Type 1 subfamily. LysY sub-subfamily.

The protein localises to the cytoplasm. The catalysed reaction is [amino-group carrier protein]-C-terminal-N-(1-carboxy-5-oxopentan-1-yl)-L-glutamine + phosphate + NADP(+) = [amino-group carrier protein]-C-terminal-N-(1-carboxy-5-phosphooxy-5-oxopentan-1-yl)-L-glutamine + NADPH + H(+). It carries out the reaction [amino-group carrier protein]-C-terminal-gamma-(L-glutamyl-5-semialdehyde)-L-glutamate + phosphate + NADP(+) = [amino-group carrier protein]-C-terminal-gamma-(5-phospho-L-glutamyl)-L-glutamate + NADPH + H(+). It functions in the pathway amino-acid biosynthesis; L-lysine biosynthesis via AAA pathway; L-lysine from L-alpha-aminoadipate (Thermus route): step 3/5. Its pathway is amino-acid biosynthesis; L-arginine biosynthesis. Functionally, involved in both the arginine and lysine biosynthetic pathways. The sequence is that of Putative [LysW]-L-2-aminoadipate/[LysW]-L-glutamate phosphate reductase from Haloquadratum walsbyi (strain DSM 16790 / HBSQ001).